Reading from the N-terminus, the 95-residue chain is Aspartyl/glutamyl-tRNA(Asn/Gln) amidotransferase subunit C (95 aa).

Belongs to the GatC family. As to quaternary structure, heterotrimer of A, B and C subunits.

The enzyme catalyses L-glutamyl-tRNA(Gln) + L-glutamine + ATP + H2O = L-glutaminyl-tRNA(Gln) + L-glutamate + ADP + phosphate + H(+). It carries out the reaction L-aspartyl-tRNA(Asn) + L-glutamine + ATP + H2O = L-asparaginyl-tRNA(Asn) + L-glutamate + ADP + phosphate + 2 H(+). Allows the formation of correctly charged Asn-tRNA(Asn) or Gln-tRNA(Gln) through the transamidation of misacylated Asp-tRNA(Asn) or Glu-tRNA(Gln) in organisms which lack either or both of asparaginyl-tRNA or glutaminyl-tRNA synthetases. The reaction takes place in the presence of glutamine and ATP through an activated phospho-Asp-tRNA(Asn) or phospho-Glu-tRNA(Gln). The sequence is that of Aspartyl/glutamyl-tRNA(Asn/Gln) amidotransferase subunit C from Chlorobium limicola (strain DSM 245 / NBRC 103803 / 6330).